Consider the following 106-residue polypeptide: Aspartyl/glutamyl-tRNA(Asn/Gln) amidotransferase subunit C (106 aa).

The protein belongs to the GatC family. In terms of assembly, heterotrimer of A, B and C subunits.

It carries out the reaction L-glutamyl-tRNA(Gln) + L-glutamine + ATP + H2O = L-glutaminyl-tRNA(Gln) + L-glutamate + ADP + phosphate + H(+). The catalysed reaction is L-aspartyl-tRNA(Asn) + L-glutamine + ATP + H2O = L-asparaginyl-tRNA(Asn) + L-glutamate + ADP + phosphate + 2 H(+). Its function is as follows. Allows the formation of correctly charged Asn-tRNA(Asn) or Gln-tRNA(Gln) through the transamidation of misacylated Asp-tRNA(Asn) or Glu-tRNA(Gln) in organisms which lack either or both of asparaginyl-tRNA or glutaminyl-tRNA synthetases. The reaction takes place in the presence of glutamine and ATP through an activated phospho-Asp-tRNA(Asn) or phospho-Glu-tRNA(Gln). This chain is Aspartyl/glutamyl-tRNA(Asn/Gln) amidotransferase subunit C, found in Lactiplantibacillus plantarum (strain ATCC BAA-793 / NCIMB 8826 / WCFS1) (Lactobacillus plantarum).